A 545-amino-acid polypeptide reads, in one-letter code: Chaperonin GroEL (545 aa).

Residues 30 to 33 (TLGP), K51, 87 to 91 (DGTTT), G415, and D495 contribute to the ATP site.

It belongs to the chaperonin (HSP60) family. As to quaternary structure, forms a cylinder of 14 subunits composed of two heptameric rings stacked back-to-back. Interacts with the co-chaperonin GroES.

Its subcellular location is the cytoplasm. It carries out the reaction ATP + H2O + a folded polypeptide = ADP + phosphate + an unfolded polypeptide.. Functionally, together with its co-chaperonin GroES, plays an essential role in assisting protein folding. The GroEL-GroES system forms a nano-cage that allows encapsulation of the non-native substrate proteins and provides a physical environment optimized to promote and accelerate protein folding. This is Chaperonin GroEL from Shewanella oneidensis (strain ATCC 700550 / JCM 31522 / CIP 106686 / LMG 19005 / NCIMB 14063 / MR-1).